Reading from the N-terminus, the 310-residue chain is MTAPLFESTITSLPLINKGKVRDIYAVDADKLLIVTTDRLSAFDVILPDPIPRKGEVLQAVANFWFDKLGHIVPNQLTGIDPETVVAENEREQVRGRAVVVKRLKPLPIEAVVRGYVIGSGWKDYQETGAICGIALPAGLKMAAKLPSPIFTPATKAAVGDHDENVSFATAQANCAADLAEALAGTGKNGAGLADEARIAAIRLYEEASAYARGRGIIIADTKFEFGIDAAGTLHLIDEALTPDSSRFWPADHYQEGSNPPSYDKQYVRDYLETLDWGKVAPGPKLPADVIARTSAKYIEAYEKLTGKTL.

Belongs to the SAICAR synthetase family.

It carries out the reaction 5-amino-1-(5-phospho-D-ribosyl)imidazole-4-carboxylate + L-aspartate + ATP = (2S)-2-[5-amino-1-(5-phospho-beta-D-ribosyl)imidazole-4-carboxamido]succinate + ADP + phosphate + 2 H(+). The protein operates within purine metabolism; IMP biosynthesis via de novo pathway; 5-amino-1-(5-phospho-D-ribosyl)imidazole-4-carboxamide from 5-amino-1-(5-phospho-D-ribosyl)imidazole-4-carboxylate: step 1/2. The sequence is that of Phosphoribosylaminoimidazole-succinocarboxamide synthase from Dechloromonas aromatica (strain RCB).